A 258-amino-acid chain; its full sequence is N(G),N(G)-dimethylarginine dimethylaminohydrolase (258 aa).

Substrate-binding positions include Leu19, Asp62, 67–68 (ED), Arg87, and Arg133. His163 functions as the Proton donor in the catalytic mechanism. Catalysis depends on Cys248, which acts as the Nucleophile.

It belongs to the DDAH family.

The enzyme catalyses N(omega),N(omega)-dimethyl-L-arginine + H2O = dimethylamine + L-citrulline. The catalysed reaction is N(omega)-methyl-L-arginine + H2O = L-citrulline + methylamine. Its function is as follows. Hydrolyzes N(G),N(G)-dimethyl-L-arginine (ADMA) and N(G)-monomethyl-L-arginine (MMA). The protein is N(G),N(G)-dimethylarginine dimethylaminohydrolase (ddaH) of Streptomyces coelicolor (strain ATCC BAA-471 / A3(2) / M145).